Here is a 413-residue protein sequence, read N- to C-terminus: Histidine--tRNA ligase (413 aa).

The protein belongs to the class-II aminoacyl-tRNA synthetase family. As to quaternary structure, homodimer.

It localises to the cytoplasm. It catalyses the reaction tRNA(His) + L-histidine + ATP = L-histidyl-tRNA(His) + AMP + diphosphate + H(+). The polypeptide is Histidine--tRNA ligase (Ehrlichia canis (strain Jake)).